The primary structure comprises 873 residues: uncharacterized protein (873 aa).

Disordered regions lie at residues 1-24, 175-251, 375-423, 506-540, 568-592, 662-773, and 822-855; these read MSNKPDANDQCMVKETISRMSMSK, SSAV…TSIS, PSRH…AKKP, DSESASYNTDDANSVVSPSKDGISTTTVSSDATRS, DQSSRYPGRHFGKTGRSHFPRAPEY, ANDS…TSQI, and ANPYSTNNDGNPSNNTSDVEVNETSMNDNSEEPI. Positions 211–225 are enriched in basic and acidic residues; sequence KDSDRSQTKNTHEET. The span at 376-385 shows a compositional bias: basic residues; the sequence is SRHHSHRKKE. A compositionally biased stretch (basic residues) spans 574 to 586; that stretch reads PGRHFGKTGRSHF. Positions 665–686 are enriched in low complexity; the sequence is SPNSSESLESLNNQSYSSSPYS. A compositionally biased stretch (polar residues) spans 698-740; sequence QSLNDSPQTSDFKASNLNDSSSNVHSIFQTRETTSPSVQNKTP. Residues 743–755 are compositionally biased toward basic and acidic residues; sequence YHRELKSSKDGHE. Low complexity predominate over residues 758–773; the sequence is SPLVSSSPSGSFTSQI. Residues 823–855 show a composition bias toward polar residues; it reads NPYSTNNDGNPSNNTSDVEVNETSMNDNSEEPI.

The protein localises to the cytoplasm. It is found in the vacuole membrane. This is an uncharacterized protein from Schizosaccharomyces pombe (strain 972 / ATCC 24843) (Fission yeast).